We begin with the raw amino-acid sequence, 290 residues long: Pyridoxal kinase PdxY (290 aa).

Substrate-binding positions include Ser-12 and 47-48 (TQ). Residues Asp-114, Glu-151, Lys-184, and 211–214 (RPLL) each bind ATP. Substrate is bound at residue Asp-225.

It belongs to the pyridoxine kinase family. PdxY subfamily. As to quaternary structure, homodimer. It depends on Mg(2+) as a cofactor.

It carries out the reaction pyridoxal + ATP = pyridoxal 5'-phosphate + ADP + H(+). It functions in the pathway cofactor metabolism; pyridoxal 5'-phosphate salvage; pyridoxal 5'-phosphate from pyridoxal: step 1/1. Its function is as follows. Pyridoxal kinase involved in the salvage pathway of pyridoxal 5'-phosphate (PLP). Catalyzes the phosphorylation of pyridoxal to PLP. In Pseudomonas putida (strain ATCC 700007 / DSM 6899 / JCM 31910 / BCRC 17059 / LMG 24140 / F1), this protein is Pyridoxal kinase PdxY.